The primary structure comprises 104 residues: Circadian clock oscillator protein KaiB (104 aa).

Belongs to the KaiB family. As to quaternary structure, the KaiABC complex composition changes during the circadian cycle to control KaiC phosphorylation. Complexes KaiC(6), KaiA(2-4):KaiC(6), KaiB(6):KaiC(6) and KaiC(6):KaiB(6):KaiA(12) are among the most important forms, many form cooperatively. Undergoes a major conformational rearrangment; in the free state forms homotetramers as a dimer of dimers. When bound to the CI domain of KaiC switches to a monomeric thioredoxin-fold (KaiB(fs)). KaiB(fs) binds CikA, leading it to dephosphorylate phospho-RpaA.

Its function is as follows. Key component of the KaiABC oscillator complex, which constitutes the main circadian regulator in cyanobacteria. Complex composition changes during the circadian cycle to control KaiC phosphorylation. KaiA stimulates KaiC autophosphorylation, while KaiB sequesters KaiA, leading to KaiC autodephosphorylation. Phospho-Ser-431 KaiC accumulation triggers binding of KaiB to form the KaiB(6):KaiC(6) complex, leading to changes in output regulators CikA and SasA. KaiB switches to a thioredoxin-like fold (KaiB(fs)) when bound to KaiC. KaiB(6):KaiC(6) formation exposes a site for KaiA binding that sequesters KaiA from KaiC, making the KaiC(6):KaiB(6):KaiA(12) complex that results in KaiC autodephosphorylation. A metamorphic protein which reversibly switches between an inactive tetrameric fold and a rare, thioredoxin-like monomeric fold (KaiB(fs)). KaiB(fs) binds phospho-KaiC, KaiA and CikA. KaiA and CikA compete for binding to KaiB(fs), and KaiB(fs) and SasA compete for binding to KaiC, thus the clock oscillator and output signal pathway are tightly coupled. This chain is Circadian clock oscillator protein KaiB, found in Picosynechococcus sp. (strain ATCC 27264 / PCC 7002 / PR-6) (Agmenellum quadruplicatum).